Reading from the N-terminus, the 460-residue chain is Elongation factor 1-alpha (460 aa).

Gly-2 bears the N,N,N-trimethylglycine mark. Lys-3 carries the N6,N6-dimethyllysine; alternate modification. At Lys-3 the chain carries N6-methyllysine; alternate. In terms of domain architecture, tr-type G spans 6-241 (KQHINIVVIG…DAIEPPVRPT (236 aa)). The interval 15–22 (GHVDSGKS) is G1. 15 to 22 (GHVDSGKS) serves as a coordination point for GTP. Lys-31 bears the N6-methyllysine mark. The tract at residues 71–75 (GITID) is G2. N6,N6,N6-trimethyllysine is present on Lys-80. The tract at residues 92-95 (DAPG) is G3. GTP is bound by residues 92–96 (DAPGH) and 154–157 (NKMD). The G4 stretch occupies residues 154–157 (NKMD). A G5 region spans residues 193–195 (SGF). Lys-317 carries the post-translational modification N6,N6-dimethyllysine; alternate. Lys-317 carries the post-translational modification N6-methyllysine; alternate. At Lys-391 the chain carries N6-methyllysine.

It belongs to the TRAFAC class translation factor GTPase superfamily. Classic translation factor GTPase family. EF-Tu/EF-1A subfamily.

It localises to the cytoplasm. Functionally, this protein promotes the GTP-dependent binding of aminoacyl-tRNA to the A-site of ribosomes during protein biosynthesis. This is Elongation factor 1-alpha (tef1) from Aspergillus oryzae (strain ATCC 42149 / RIB 40) (Yellow koji mold).